Here is a 394-residue protein sequence, read N- to C-terminus: Dual-specificity RNA methyltransferase RlmN (394 aa).

Glutamate 115 acts as the Proton acceptor in catalysis. The 240-residue stretch at glutamate 121 to aspartate 360 folds into the Radical SAM core domain. Cysteine 128 and cysteine 365 are disulfide-bonded. Residues cysteine 135, cysteine 139, and cysteine 142 each contribute to the [4Fe-4S] cluster site. S-adenosyl-L-methionine-binding positions include glycine 189–glutamate 190, serine 221, serine 243–histidine 245, and asparagine 322. The S-methylcysteine intermediate role is filled by cysteine 365.

Belongs to the radical SAM superfamily. RlmN family. It depends on [4Fe-4S] cluster as a cofactor.

It is found in the cytoplasm. The catalysed reaction is adenosine(2503) in 23S rRNA + 2 reduced [2Fe-2S]-[ferredoxin] + 2 S-adenosyl-L-methionine = 2-methyladenosine(2503) in 23S rRNA + 5'-deoxyadenosine + L-methionine + 2 oxidized [2Fe-2S]-[ferredoxin] + S-adenosyl-L-homocysteine. It catalyses the reaction adenosine(37) in tRNA + 2 reduced [2Fe-2S]-[ferredoxin] + 2 S-adenosyl-L-methionine = 2-methyladenosine(37) in tRNA + 5'-deoxyadenosine + L-methionine + 2 oxidized [2Fe-2S]-[ferredoxin] + S-adenosyl-L-homocysteine. In terms of biological role, specifically methylates position 2 of adenine 2503 in 23S rRNA and position 2 of adenine 37 in tRNAs. m2A2503 modification seems to play a crucial role in the proofreading step occurring at the peptidyl transferase center and thus would serve to optimize ribosomal fidelity. This Pasteurella multocida (strain Pm70) protein is Dual-specificity RNA methyltransferase RlmN.